We begin with the raw amino-acid sequence, 103 residues long: Large ribosomal subunit protein bL21 (103 aa).

The protein belongs to the bacterial ribosomal protein bL21 family. In terms of assembly, part of the 50S ribosomal subunit. Contacts protein L20.

In terms of biological role, this protein binds to 23S rRNA in the presence of protein L20. This chain is Large ribosomal subunit protein bL21, found in Polynucleobacter necessarius subsp. necessarius (strain STIR1).